Consider the following 394-residue polypeptide: Elongation factor Tu 2 (394 aa).

The region spanning 10 to 204 (KPHVNVGTIG…ALDSYIPEPE (195 aa)) is the tr-type G domain. A G1 region spans residues 19–26 (GHVDHGKT). 19-26 (GHVDHGKT) lines the GTP pocket. Position 26 (Thr-26) interacts with Mg(2+). The segment at 60 to 64 (GITIN) is G2. Residues 81-84 (DCPG) form a G3 region. GTP is bound by residues 81-85 (DCPGH) and 136-139 (NKCD). The tract at residues 136–139 (NKCD) is G4. Residues 174–176 (SAL) form a G5 region.

It belongs to the TRAFAC class translation factor GTPase superfamily. Classic translation factor GTPase family. EF-Tu/EF-1A subfamily. Monomer.

The protein resides in the cytoplasm. The catalysed reaction is GTP + H2O = GDP + phosphate + H(+). GTP hydrolase that promotes the GTP-dependent binding of aminoacyl-tRNA to the A-site of ribosomes during protein biosynthesis. The chain is Elongation factor Tu 2 from Shewanella sp. (strain MR-4).